Reading from the N-terminus, the 520-residue chain is UDP-N-acetylmuramoyl-L-alanyl-D-glutamate--2,6-diaminopimelate ligase (520 aa).

Leucine 48 lines the UDP-N-acetyl-alpha-D-muramoyl-L-alanyl-D-glutamate pocket. An ATP-binding site is contributed by 134-140 (GTSGKTT). UDP-N-acetyl-alpha-D-muramoyl-L-alanyl-D-glutamate is bound by residues 176-177 (TT), serine 203, and arginine 211. Lysine 243 carries the post-translational modification N6-carboxylysine. Meso-2,6-diaminopimelate is bound by residues arginine 405, 429 to 432 (DNPR), glycine 483, and glutamate 487. The Meso-diaminopimelate recognition motif signature appears at 429–432 (DNPR).

It belongs to the MurCDEF family. MurE subfamily. It depends on Mg(2+) as a cofactor. In terms of processing, carboxylation is probably crucial for Mg(2+) binding and, consequently, for the gamma-phosphate positioning of ATP.

It is found in the cytoplasm. The enzyme catalyses UDP-N-acetyl-alpha-D-muramoyl-L-alanyl-D-glutamate + meso-2,6-diaminopimelate + ATP = UDP-N-acetyl-alpha-D-muramoyl-L-alanyl-gamma-D-glutamyl-meso-2,6-diaminopimelate + ADP + phosphate + H(+). The protein operates within cell wall biogenesis; peptidoglycan biosynthesis. In terms of biological role, catalyzes the addition of meso-diaminopimelic acid to the nucleotide precursor UDP-N-acetylmuramoyl-L-alanyl-D-glutamate (UMAG) in the biosynthesis of bacterial cell-wall peptidoglycan. In Mycobacterium avium (strain 104), this protein is UDP-N-acetylmuramoyl-L-alanyl-D-glutamate--2,6-diaminopimelate ligase.